We begin with the raw amino-acid sequence, 320 residues long: Arylacetonitrilase (320 aa).

One can recognise a CN hydrolase domain in the interval 5–286; sequence IKASVVQAST…EGVISAELDL (282 aa). Glu-46 serves as the catalytic Proton acceptor. Lys-133 is an active-site residue. Catalysis depends on Cys-178, which acts as the Nucleophile.

The protein belongs to the carbon-nitrogen hydrolase superfamily. Nitrilase family.

The enzyme catalyses a nitrile + 2 H2O = a carboxylate + NH4(+). Nitrilase that hydrolyzes preferentially fumaronitrile, while 3-phenylpropionitrile, beta-cyano-L-alanine and 4-cyanopyridine are transformed at much lower rates. In Trametes versicolor (strain FP-101664) (White-rot fungus), this protein is Arylacetonitrilase (nit).